The chain runs to 460 residues: Fumarate hydratase class II (460 aa).

Residues serine 95–threonine 97, histidine 126–aspartate 129, serine 136–asparagine 138, and threonine 184 each bind substrate. Residue histidine 185 is the Proton donor/acceptor of the active site. Residue serine 315 is part of the active site. Substrate is bound by residues serine 316 and lysine 321 to asparagine 323.

Belongs to the class-II fumarase/aspartase family. Fumarase subfamily. In terms of assembly, homotetramer.

It is found in the cytoplasm. It carries out the reaction (S)-malate = fumarate + H2O. It participates in carbohydrate metabolism; tricarboxylic acid cycle; (S)-malate from fumarate: step 1/1. Its function is as follows. Involved in the TCA cycle. Catalyzes the stereospecific interconversion of fumarate to L-malate. This is Fumarate hydratase class II from Chlamydia pneumoniae (Chlamydophila pneumoniae).